A 426-amino-acid polypeptide reads, in one-letter code: MDLFLQIRKVNLFFPDKRDRPFSPDRINRPFSPDKKGEPIFPDKRDRPFSSDRINRPFSPDKKGEPIFPDKKDRPFSSDRINRPFSPDKKGEPIFPDKRDRPFSPDKKGEYIYPDKRDRSFSPYRINRSFYQDKKGESIYLDKRDKYFFSDRKNRHFFLDKKDEPIFTDDINKSIFLDEKDKLSYVDKKNISFSVGDGKSESVYRDKMDKFIFSNESNKSFYLDKKDESFYLDMMNTPFYSDWRNRLFNPDKSNKSFSSNKKDESVFFDKRNKLFSADKGNIPFSLNEKSEPVYFDKKDKFIFSDKRDKPIFSDNKDKVFFSNKENKFIFSDEKYESIFKDRPFFIDRSKYNKPFFIDKSKYNRPFFIDKSKSNNIPFFSYQKKEPFIYRKNKPLNYQKNKNFFYKRKRKKKLNRLFCKMAMVYIL.

Residues 17-114 are disordered; it reads KRDRPFSPDR…PDKKGEYIYP (98 aa).

The protein resides in the plastid. This is an uncharacterized protein from Euglena longa (Euglenophycean alga).